A 442-amino-acid chain; its full sequence is C4-dicarboxylate transport protein (442 aa).

The next 8 helical transmembrane spans lie at 10 to 30 (VQVL…PSLG), 40 to 60 (FIKL…VSGI), 77 to 97 (LLYF…IVNI), 144 to 164 (FTQG…FALL), 183 to 203 (VIFV…FGAM), 221 to 241 (LMIT…GLIA), 331 to 351 (LLGV…SGFI), and 354 to 374 (AATL…ILGI). Residues 418–442 (LPTIEPDVHSEERGEGRELDSLRPA) form a disordered region. The segment covering 423-442 (PDVHSEERGEGRELDSLRPA) has biased composition (basic and acidic residues).

This sequence belongs to the dicarboxylate/amino acid:cation symporter (DAACS) (TC 2.A.23) family.

Its subcellular location is the cell membrane. Functionally, responsible for the transport of dicarboxylates such as succinate, fumarate, and malate across the membrane. The chain is C4-dicarboxylate transport protein from Deinococcus deserti (strain DSM 17065 / CIP 109153 / LMG 22923 / VCD115).